A 233-amino-acid polypeptide reads, in one-letter code: Cytochrome c biogenesis ATP-binding export protein CcmA (233 aa).

The ABC transporter domain occupies 17–233 (FAGEDLLCVR…AAGLFLEDEG (217 aa)). 49 to 56 (GPNGSGKS) contributes to the ATP binding site.

Belongs to the ABC transporter superfamily. CcmA exporter (TC 3.A.1.107) family. The complex is composed of two ATP-binding proteins (CcmA) and two transmembrane proteins (CcmB).

It is found in the cell inner membrane. It catalyses the reaction heme b(in) + ATP + H2O = heme b(out) + ADP + phosphate + H(+). Part of the ABC transporter complex CcmAB involved in the biogenesis of c-type cytochromes; once thought to export heme, this seems not to be the case, but its exact role is uncertain. Responsible for energy coupling to the transport system. The sequence is that of Cytochrome c biogenesis ATP-binding export protein CcmA from Rhodospirillum rubrum (strain ATCC 11170 / ATH 1.1.1 / DSM 467 / LMG 4362 / NCIMB 8255 / S1).